The sequence spans 420 residues: Glutamate dehydrogenase (420 aa).

Residue lysine 105 is part of the active site. 220–226 (GYGNAGY) is a binding site for NAD(+).

Belongs to the Glu/Leu/Phe/Val dehydrogenases family. In terms of assembly, homohexamer.

The protein localises to the cytoplasm. The catalysed reaction is L-glutamate + NAD(+) + H2O = 2-oxoglutarate + NH4(+) + NADH + H(+). The enzyme catalyses L-glutamate + NADP(+) + H2O = 2-oxoglutarate + NH4(+) + NADPH + H(+). The protein is Glutamate dehydrogenase (gdhA) of Pyrococcus abyssi (strain GE5 / Orsay).